The primary structure comprises 112 residues: T cell receptor alpha variable 12-1 (112 aa).

An N-terminal signal peptide occupies residues 1–20 (MISLRVLLVILWLQLSWVWS). An Ig-like domain is found at 23–112 (KEVEQDPGPF…DSATYLCVVN (90 aa)). Asn-43 carries N-linked (GlcNAc...) asparagine glycosylation. Cys-44 and Cys-109 are disulfide-bonded.

As to quaternary structure, alpha-beta TR is a heterodimer composed of an alpha and beta chain; disulfide-linked. The alpha-beta TR is associated with the transmembrane signaling CD3 coreceptor proteins to form the TR-CD3 (TcR or TCR). The assembly of alpha-beta TR heterodimers with CD3 occurs in the endoplasmic reticulum where a single alpha-beta TR heterodimer associates with one CD3D-CD3E heterodimer, one CD3G-CD3E heterodimer and one CD247 homodimer forming a stable octameric structure. CD3D-CD3E and CD3G-CD3E heterodimers preferentially associate with TR alpha and TR beta chains, respectively. The association of the CD247 homodimer is the last step of TcR assembly in the endoplasmic reticulum and is required for transport to the cell surface.

The protein resides in the cell membrane. Functionally, v region of the variable domain of T cell receptor (TR) alpha chain that participates in the antigen recognition. Alpha-beta T cell receptors are antigen specific receptors which are essential to the immune response and are present on the cell surface of T lymphocytes. Recognize peptide-major histocompatibility (MH) (pMH) complexes that are displayed by antigen presenting cells (APC), a prerequisite for efficient T cell adaptive immunity against pathogens. Binding of alpha-beta TR to pMH complex initiates TR-CD3 clustering on the cell surface and intracellular activation of LCK that phosphorylates the ITAM motifs of CD3G, CD3D, CD3E and CD247 enabling the recruitment of ZAP70. In turn ZAP70 phosphorylates LAT, which recruits numerous signaling molecules to form the LAT signalosome. The LAT signalosome propagates signal branching to three major signaling pathways, the calcium, the mitogen-activated protein kinase (MAPK) kinase and the nuclear factor NF-kappa-B (NF-kB) pathways, leading to the mobilization of transcription factors that are critical for gene expression and essential for T cell growth and differentiation. The T cell repertoire is generated in the thymus, by V-(D)-J rearrangement. This repertoire is then shaped by intrathymic selection events to generate a peripheral T cell pool of self-MH restricted, non-autoaggressive T cells. Post-thymic interaction of alpha-beta TR with the pMH complexes shapes TR structural and functional avidity. This Homo sapiens (Human) protein is T cell receptor alpha variable 12-1.